The following is a 403-amino-acid chain: PP2A regulatory subunit TAP46 (403 aa).

Disordered stretches follow at residues 158-184 (ERRG…LDDD) and 351-403 (ANSS…TPCG). Composition is skewed to acidic residues over residues 174 to 184 (ETEEDDVLDDD) and 366 to 375 (EDDEEDDDDA). Positions 376-391 (AQDKARAWDDWKDDNP) are enriched in basic and acidic residues.

The protein belongs to the IGBP1/TAP42 family. In terms of assembly, interacts with NPP4 and NPP5, two catalytic subunits (subunit C) of PP2A.

The protein localises to the cytoplasm. Its subcellular location is the nucleus. Involved in the regulation of the TOR signaling pathway. Seems to act as a regulator of PP2A catalytic activity. The polypeptide is PP2A regulatory subunit TAP46 (Nicotiana benthamiana).